Consider the following 833-residue polypeptide: 3-hydroxy-3-methylglutaryl-coenzyme A reductase (833 aa).

4 helical membrane-spanning segments follow: residues 10–32 (FCAR…AASV), 91–117 (YLLI…LFWS), 160–180 (LALL…LVGV), and 301–321 (SADY…FVFF). Residues 322–419 (EEQRNWVIDM…EEVVMLVEQS (98 aa)) form a linker region. The tract at residues 347–374 (KPKFSVGDDSNSEVSTQTEGVLEDEWPT) is disordered. The span at 354 to 365 (DDSNSEVSTQTE) shows a compositional bias: polar residues. The segment at 420–833 (HIPLHRLEAV…ENITLKVPTL (414 aa)) is catalytic. Residues Glu-504 and Lys-635 each act as charge relay system in the active site. The N-linked (GlcNAc...) asparagine glycan is linked to Asn-680. Asp-711 functions as the Charge relay system in the catalytic mechanism. 2 N-linked (GlcNAc...) asparagine glycosylation sites follow: Asn-715 and Asn-720. His-809 (proton donor) is an active-site residue. N-linked (GlcNAc...) asparagine glycans are attached at residues Asn-813 and Asn-825.

Belongs to the HMG-CoA reductase family.

It is found in the endoplasmic reticulum membrane. It carries out the reaction (R)-mevalonate + 2 NADP(+) + CoA = (3S)-3-hydroxy-3-methylglutaryl-CoA + 2 NADPH + 2 H(+). The protein operates within metabolic intermediate biosynthesis; (R)-mevalonate biosynthesis; (R)-mevalonate from acetyl-CoA: step 3/3. With respect to regulation, the activity of HMG-CoA-reductase is suppressed by exogenous mevalonate. Synthesis of mevalonate for the production of non-sterol isoprenoids, which are essential for growth differentiation. This Agrotis ipsilon (Black cutworm moth) protein is 3-hydroxy-3-methylglutaryl-coenzyme A reductase (HMGR).